Consider the following 491-residue polypeptide: Acetyl-coenzyme A carboxylase carboxyl transferase subunit beta (491 aa).

The CoA carboxyltransferase N-terminal domain occupies 132–491; it reads LWNQCENCFI…ISELLNLHAL (360 aa). Zn(2+) is bound by residues cysteine 136, cysteine 139, cysteine 155, and cysteine 158. Residues 136-158 form a C4-type zinc finger; the sequence is CENCFIPNYKKVLKSNMQICEEC. The segment covering 252–262 has biased composition (basic and acidic residues); it reads EKVEEWTKPDL. Disordered regions lie at residues 252–273 and 279–298; these read EKVEEWTKPDLDEGEESQDEER and DKGEESQEIEDSEANDEDDD. A compositionally biased stretch (acidic residues) spans 284 to 298; it reads SQEIEDSEANDEDDD.

Belongs to the AccD/PCCB family. Acetyl-CoA carboxylase is a heterohexamer composed of biotin carboxyl carrier protein, biotin carboxylase and 2 subunits each of ACCase subunit alpha and ACCase plastid-coded subunit beta (accD). Zn(2+) is required as a cofactor.

Its subcellular location is the plastid. The catalysed reaction is N(6)-carboxybiotinyl-L-lysyl-[protein] + acetyl-CoA = N(6)-biotinyl-L-lysyl-[protein] + malonyl-CoA. It functions in the pathway lipid metabolism; malonyl-CoA biosynthesis; malonyl-CoA from acetyl-CoA: step 1/1. In terms of biological role, component of the acetyl coenzyme A carboxylase (ACC) complex. Biotin carboxylase (BC) catalyzes the carboxylation of biotin on its carrier protein (BCCP) and then the CO(2) group is transferred by the transcarboxylase to acetyl-CoA to form malonyl-CoA. The protein is Acetyl-coenzyme A carboxylase carboxyl transferase subunit beta of Cuscuta gronovii (Common dodder).